The sequence spans 476 residues: Bifunctional protein HldE (476 aa).

The segment at 1–318 is ribokinase; sequence MKPILPDYNS…AEAVHGSQDT (318 aa). 195–198 is a binding site for ATP; it reads NMKE. The active site involves Asp264. Residues 344–476 are cytidylyltransferase; it reads MTNGCFDILH…IINAIKGGKG (133 aa).

This sequence in the N-terminal section; belongs to the carbohydrate kinase PfkB family. In the C-terminal section; belongs to the cytidylyltransferase family. In terms of assembly, homodimer.

The enzyme catalyses D-glycero-beta-D-manno-heptose 7-phosphate + ATP = D-glycero-beta-D-manno-heptose 1,7-bisphosphate + ADP + H(+). It carries out the reaction D-glycero-beta-D-manno-heptose 1-phosphate + ATP + H(+) = ADP-D-glycero-beta-D-manno-heptose + diphosphate. The protein operates within nucleotide-sugar biosynthesis; ADP-L-glycero-beta-D-manno-heptose biosynthesis; ADP-L-glycero-beta-D-manno-heptose from D-glycero-beta-D-manno-heptose 7-phosphate: step 1/4. It functions in the pathway nucleotide-sugar biosynthesis; ADP-L-glycero-beta-D-manno-heptose biosynthesis; ADP-L-glycero-beta-D-manno-heptose from D-glycero-beta-D-manno-heptose 7-phosphate: step 3/4. Its pathway is bacterial outer membrane biogenesis; LPS core biosynthesis. Its function is as follows. Catalyzes the phosphorylation of D-glycero-D-manno-heptose 7-phosphate at the C-1 position to selectively form D-glycero-beta-D-manno-heptose-1,7-bisphosphate. In terms of biological role, catalyzes the ADP transfer from ATP to D-glycero-beta-D-manno-heptose 1-phosphate, yielding ADP-D-glycero-beta-D-manno-heptose. The protein is Bifunctional protein HldE of Vibrio parahaemolyticus serotype O3:K6 (strain RIMD 2210633).